The chain runs to 380 residues: Cytochrome b (380 aa).

The next 4 helical transmembrane spans lie at 34 to 54 (FGSLLGMCLIIQILTGLFLAM), 78 to 99 (WLIRNIHANGASMFFICVYLHI), 114 to 134 (WNIGVVILLLLMVTAFVGYVL), and 179 to 199 (FFTFHFLFPFVTAALTMIHLL). Histidine 84 and histidine 98 together coordinate heme b. Heme b is bound by residues histidine 183 and histidine 197. A ubiquinone is bound at residue histidine 202. Helical transmembrane passes span 227-247 (YKDLVGFFILLFLLTLLALFT), 289-309 (LGGVLALVFSILILLLVPILH), 321-341 (ITQILFWLLVTNTIILTWIGG), and 348-368 (FITIGQIASITYFSFFLILFP).

It belongs to the cytochrome b family. The cytochrome bc1 complex contains 3 respiratory subunits (MT-CYB, CYC1 and UQCRFS1), 2 core proteins (UQCRC1 and UQCRC2) and probably 6 low-molecular weight proteins. Heme b is required as a cofactor.

The protein localises to the mitochondrion inner membrane. Component of the ubiquinol-cytochrome c reductase complex (complex III or cytochrome b-c1 complex) that is part of the mitochondrial respiratory chain. The b-c1 complex mediates electron transfer from ubiquinol to cytochrome c. Contributes to the generation of a proton gradient across the mitochondrial membrane that is then used for ATP synthesis. This Hemitrygon laosensis (Mekong freshwater stingray) protein is Cytochrome b (mt-cyb).